The chain runs to 959 residues: Protein SEY1 homolog 1 (959 aa).

The Cytoplasmic portion of the chain corresponds to 1-767; the sequence is MQESDVFHNQ…ELAAITVHSK (767 aa). Residues 9–86 are a coiled coil; it reads NQLRVEMLKK…EEEKKEKENY (78 aa). Residues 62 to 81 form a disordered region; the sequence is EEKENMKVEEEEIKEEEEKK. The GB1/RHD3-type G domain occupies 123 to 340; it reads GFNYNMLSIL…NQNTYFRPIY (218 aa). Residue 133–140 coordinates GTP; that stretch reads GPQNSGKS. The helical transmembrane segment at 768–788 threads the bilayer; that stretch reads TPMWLILLIAFLSFDNIVYVF. Over 789-791 the chain is Lumenal; sequence KSP. A helical membrane pass occupies residues 792-812; the sequence is TLLALTLIIIGIIYSLNKIGY. At 813-959 the chain is on the cytoplasmic side; that stretch reads AYLIDSVISY…LNKIKEANEF (147 aa). A disordered region spans residues 849-868; that stretch reads EAPKRKRPQKKTQDDKPKSS.

It belongs to the TRAFAC class dynamin-like GTPase superfamily. GB1/RHD3 GTPase family. RHD3 subfamily.

Its subcellular location is the endoplasmic reticulum membrane. Probable GTP-binding protein that may be involved in cell development. In Entamoeba histolytica (strain ATCC 30459 / HM-1:IMSS / ABRM), this protein is Protein SEY1 homolog 1.